Consider the following 256-residue polypeptide: Thiazole synthase (256 aa).

Catalysis depends on K95, which acts as the Schiff-base intermediate with DXP. Residues G156, 182 to 183 (AG), and 204 to 205 (NT) each bind 1-deoxy-D-xylulose 5-phosphate.

This sequence belongs to the ThiG family. As to quaternary structure, homotetramer. Forms heterodimers with either ThiH or ThiS.

The protein resides in the cytoplasm. The enzyme catalyses [ThiS sulfur-carrier protein]-C-terminal-Gly-aminoethanethioate + 2-iminoacetate + 1-deoxy-D-xylulose 5-phosphate = [ThiS sulfur-carrier protein]-C-terminal Gly-Gly + 2-[(2R,5Z)-2-carboxy-4-methylthiazol-5(2H)-ylidene]ethyl phosphate + 2 H2O + H(+). It functions in the pathway cofactor biosynthesis; thiamine diphosphate biosynthesis. Catalyzes the rearrangement of 1-deoxy-D-xylulose 5-phosphate (DXP) to produce the thiazole phosphate moiety of thiamine. Sulfur is provided by the thiocarboxylate moiety of the carrier protein ThiS. In vitro, sulfur can be provided by H(2)S. The polypeptide is Thiazole synthase (Escherichia coli O17:K52:H18 (strain UMN026 / ExPEC)).